The primary structure comprises 438 residues: 23S rRNA (uracil(1939)-C(5))-methyltransferase RlmD (438 aa).

In terms of domain architecture, TRAM spans 8–68; the sequence is KQKTNNVQTI…RQYGHATAKK (61 aa). Residues Cys-81, Cys-87, Cys-90, and Cys-168 each coordinate [4Fe-4S] cluster. S-adenosyl-L-methionine is bound by residues Gln-271, Phe-300, Asn-305, Glu-321, Asp-348, and Asp-369. The active-site Nucleophile is Cys-395.

The protein belongs to the class I-like SAM-binding methyltransferase superfamily. RNA M5U methyltransferase family. RlmD subfamily.

It carries out the reaction uridine(1939) in 23S rRNA + S-adenosyl-L-methionine = 5-methyluridine(1939) in 23S rRNA + S-adenosyl-L-homocysteine + H(+). Its function is as follows. Catalyzes the formation of 5-methyl-uridine at position 1939 (m5U1939) in 23S rRNA. The sequence is that of 23S rRNA (uracil(1939)-C(5))-methyltransferase RlmD from Haemophilus influenzae (strain 86-028NP).